A 562-amino-acid chain; its full sequence is Arginine--tRNA ligase (562 aa).

The 'HIGH' region signature appears at 129–139; sequence ANPTGPLHVGH.

This sequence belongs to the class-I aminoacyl-tRNA synthetase family. Monomer.

Its subcellular location is the cytoplasm. It carries out the reaction tRNA(Arg) + L-arginine + ATP = L-arginyl-tRNA(Arg) + AMP + diphosphate. The chain is Arginine--tRNA ligase from Xylella fastidiosa (strain M12).